Consider the following 307-residue polypeptide: Zinc-alpha-2-glycoprotein (307 aa).

Residues 1–17 (MVPVLLSLPLLLGPAVF) form the signal peptide. At glutamine 18 the chain carries Pyrrolidone carboxylic acid. A disulfide bridge links cysteine 118 with cysteine 181. N-linked (GlcNAc...) asparagine glycosylation is found at asparagine 123, asparagine 190, and asparagine 254. The Ig-like C1-type domain occupies 202 to 287 (PTVTITSRVI…DHRGFSQSLS (86 aa)). A disulfide bond links cysteine 220 and cysteine 275.

The protein belongs to the MHC class I family. As to quaternary structure, interacts with PIP.

It localises to the secreted. Its function is as follows. Stimulates lipid degradation in adipocytes and causes the extensive fat losses associated with some advanced cancers. The protein is Zinc-alpha-2-glycoprotein (Azgp1) of Mus musculus (Mouse).